We begin with the raw amino-acid sequence, 486 residues long: Cardiolipin synthase A (486 aa).

Helical transmembrane passes span 3-23 (TFYTVMSWLLVFGYWLLIAGV) and 38-58 (MAWLLIIYILPLVGIIAYLSL). 2 PLD phosphodiesterase domains span residues 219 to 246 (MDLRQHRKVVLIDNYIAYTGSMNLVDPR) and 399 to 426 (EGGLLHSKSILVDGQLSLVGTVNLDMRS). Active-site residues include histidine 224, lysine 226, aspartate 231, histidine 404, lysine 406, and aspartate 411.

Belongs to the phospholipase D family. Cardiolipin synthase subfamily. ClsA sub-subfamily.

It is found in the cell inner membrane. The catalysed reaction is 2 a 1,2-diacyl-sn-glycero-3-phospho-(1'-sn-glycerol) = a cardiolipin + glycerol. Its function is as follows. Catalyzes the reversible phosphatidyl group transfer from one phosphatidylglycerol molecule to another to form cardiolipin (CL) (diphosphatidylglycerol) and glycerol. This chain is Cardiolipin synthase A, found in Erwinia tasmaniensis (strain DSM 17950 / CFBP 7177 / CIP 109463 / NCPPB 4357 / Et1/99).